Reading from the N-terminus, the 606-residue chain is Limonene synthase, chloroplastic (606 aa).

The transit peptide at 1–38 (MAIINLPVPTNSSSEVNKHNHLRSCLPSGRATFTTLSA) directs the protein to the chloroplast. 5 residues coordinate (2E)-geranyl diphosphate: R320, D357, D361, R497, and D500. Mg(2+) is bound by residues D357 and D361. Residues 357-361 (DDIYD) carry the DDXXD motif motif. 3 residues coordinate Mg(2+): D500, T504, and E508.

The protein belongs to the terpene synthase family. Tpsb subfamily. In terms of assembly, monomer. The cofactor is Mg(2+). It depends on Mn(2+) as a cofactor. In terms of tissue distribution, confined to fruits.

The protein localises to the plastid. It localises to the chloroplast. It catalyses the reaction (2E,6E)-farnesyl diphosphate = (E)-beta-farnesene + diphosphate. The catalysed reaction is (2E)-geranyl diphosphate = limonene + diphosphate. The enzyme catalyses (2E)-geranyl diphosphate = beta-pinene + diphosphate. It carries out the reaction (2E)-geranyl diphosphate = sabinene + diphosphate. It catalyses the reaction (2E)-geranyl diphosphate = beta-myrcene + diphosphate. The catalysed reaction is (2E)-geranyl diphosphate = alpha-pinene + diphosphate. The enzyme catalyses (2E)-geranyl diphosphate = terpinolene + diphosphate. It participates in secondary metabolite biosynthesis; terpenoid biosynthesis. Monoterpene synthase (mono-TPS) involved in the biosynthesis of monoterpenes natural products, constituent of coffee beverage aroma. Catalyzes the conversion of (2E)-geranyl diphosphate (GPP) into limonene, beta-pinene, sabinene and beta-myrcene, and, as minor products, alpha-pinene and alpha-terpinolene. Can also, with a low efficiency, use farnesyl pyrophosphate (FPP) as substrate to produce beta-farnesene. Not able to use geranylgeranyl pyrophosphate (GGPP) as substrate. The polypeptide is Limonene synthase, chloroplastic (Coffea arabica (Arabian coffee)).